The primary structure comprises 918 residues: MSLFHHLVSRFLSLWLLIFLVFLVLSLGKSQKEALQVKVGIVLGSNVTLADLSLRAINMSLSEFYNTHNGFKTRIVLNVRDSKQTVVGAAASALYLIKKREVVAIIGPGTSMQAPFLINLGNQSKVPIISFSATSPLLDSLRSPYFIRATHDDSSQVQAISAIIESFRWREVVPIYVDNEFGEGILPNLVDAFQEINVRIRYRSAISLHYSDDQIKKELYKLMTMPTRVFIVHMLPDLGSRLFSIAKEIDMLSKGYVWIVTNGIADLMSIMGESSLVNMHGVLGVKTYFAKSKELLHLEARWQKRFGGEELNNFACWAYDAATALAMSVEEIRHVNMSFNTTKEDTSRDDIGTDLDELGVALSGPKLLDALSTVSFKGVAGRFQLKNGKLEATTFKIINIEESGERTVGFWKSKVGLVKSLRVDKVSHSSRRLRPIIWPGDTIFVPKGWEFPTNAKKLRIAVPKKDGFNNFVEVTKDENTNVPTVTGFCIDVFNTVMSQMPYAVSYEYIPFDTPDGKPRGSYDEMVYNVFLGEFDGAVGDTTILANRSHYVDFALPYSETGIVFLVPVKDGKEKGEWVFLKPLTKELWLVTAASFLYIGIMVWIFEYQADEEFREQMIIDKISSVFYFSFSTLFFAHRRPSESFFTRVLVVVWCFVLLILTQSYTATLTSMLTVQELRPTVRHMDDLRKSGVNIGYQTGSFTFERLKQMRFDESRLKTYNSPEEMRELFLHKSSNGGIDAAFDEVAYIKLFMAKYCSEYSIIEPTFKADGFGFAFPLGSPLVSDISRQILNITEGDAMKAIENKWFLGEKHCLDSTTSDSPIQLDHHSFEALFLIVFVVSVILLLLMLASRGYQERQHNASPNLPNDQANAAQEEVNEEGNVGDHIVEVDTALVRRKKLTSNTIPIRRVAPLSRLKSA.

Positions Met1–Ser30 are cleaved as a signal peptide. The Extracellular portion of the chain corresponds to Gln31–Glu586. Asn46, Asn58, Asn122, Asn336, Asn340, and Asn546 each carry an N-linked (GlcNAc...) asparagine glycan. The helical transmembrane segment at Leu587–Tyr607 threads the bilayer. Residues Gln608–Gln616 are Cytoplasmic-facing. Residues Met617 to His637 form a helical membrane-spanning segment. At Arg638–Arg647 the chain is on the cytoplasmic side. A helical transmembrane segment spans residues Val648 to Leu668. The Extracellular portion of the chain corresponds to Thr669–Ser828. Asn791 carries an N-linked (GlcNAc...) asparagine glycan. The chain crosses the membrane as a helical span at residues Phe829–Ala849. The Cytoplasmic segment spans residues Ser850–Ala918. A disordered region spans residues Gln857 to Asn881. Residues Asn866–Asn881 are compositionally biased toward low complexity.

This sequence belongs to the glutamate-gated ion channel (TC 1.A.10.1) family. In terms of assembly, may form heteromers. Expressed predominantly in roots.

Its subcellular location is the membrane. Glutamate-gated receptor that probably acts as a non-selective cation channel. May be involved in light-signal transduction and calcium homeostasis via the regulation of calcium influx into cells. The chain is Glutamate receptor 2.5 (GLR2.5) from Arabidopsis thaliana (Mouse-ear cress).